The sequence spans 427 residues: MGSIREPLHLVVIGGGLAGLSAAIATRLEGHRCTLLEKAPEFNEVGAGLQLTPNSTRLLRRWGVLDKLRSKAGIPTQLTVRRYDGSKVLSRADGWDETMQSQYDAPFWDMHRADLQAAMVARARHLGVDVRTGAEVESIDTDGVAVILAGTRERLQGDVVLAADGLWSRTRAALFPDLGTAPQPTGDLAYRIILRLENLQHDPELAAWVAKPTVNFWVGADAHAVAYSVRGGSELNLVLLCPDDLPEGCARAQADLEEMRARFQGWDPLLCRFLDNVKTVEKWRLMHMPSLPKWNHESGYFTMAGDSCHPMLPYLAQGANSAMEDGAVLGRLLGSIHEASRIPDVLAVYQEIRKVRVEKIAKQALKQRYNFHMPDGPLQEARDEAMTTHQQREEEYASQWTCPIMQPWLYGYDAIAVADSAVANTKL.

Positions 1-22 (MGSIREPLHLVVIGGGLAGLSA) are cleaved as a signal peptide. Residue Glu37 coordinates FAD. Residue Asn54 is glycosylated (N-linked (GlcNAc...) asparagine). Arg112, Asp306, and Ala319 together coordinate FAD.

Belongs to the paxM FAD-dependent monooxygenase family. FAD serves as cofactor.

It functions in the pathway secondary metabolite biosynthesis. In terms of biological role, FAD-dependent monooxygenase; part of the gene cluster that mediates the biosynthesis of the bibenzoquinone oosporein, a metabolite required for fungal virulence that acts by evading host immunity to facilitate fungal multiplication in insects. The non-reducing polyketide synthase OpS1 produces orsellinic acid by condensing acetyl-CoA with 3 malonyl-CoA units. Orsellinic acid is then hydroxylated to benzenetriol by the hydroxylase OpS4. The intermediate is oxidized either nonenzymatically to 5,5'-dideoxy-oosporein or enzymatically to benzenetetrol by the oxidoreductase OpS7. The latter is further dimerized to oosporein by the catalase OpS5. OpS6 probably functions en route for protecting cells against oxidative stress by scavenging any leaked free radical form of benzenetetrol by activating the thiol group of glutathione. This Beauveria bassiana (strain ARSEF 2860) (White muscardine disease fungus) protein is FAD-dependent monooxygenase OpS4.